The primary structure comprises 510 residues: ATP synthase subunit alpha (510 aa).

ATP is bound at residue 169–176; it reads GDRQTGKS.

It belongs to the ATPase alpha/beta chains family. As to quaternary structure, F-type ATPases have 2 components, CF(1) - the catalytic core - and CF(0) - the membrane proton channel. CF(1) has five subunits: alpha(3), beta(3), gamma(1), delta(1), epsilon(1). CF(0) has three main subunits: a(1), b(2) and c(9-12). The alpha and beta chains form an alternating ring which encloses part of the gamma chain. CF(1) is attached to CF(0) by a central stalk formed by the gamma and epsilon chains, while a peripheral stalk is formed by the delta and b chains.

It localises to the cell membrane. It carries out the reaction ATP + H2O + 4 H(+)(in) = ADP + phosphate + 5 H(+)(out). In terms of biological role, produces ATP from ADP in the presence of a proton gradient across the membrane. The alpha chain is a regulatory subunit. This Wigglesworthia glossinidia brevipalpis protein is ATP synthase subunit alpha.